A 367-amino-acid polypeptide reads, in one-letter code: Leucine-rich repeat-containing protein 28 (367 aa).

LRR repeat units lie at residues 16 to 36, 42 to 63, 66 to 87, 89 to 110, 112 to 133, 135 to 156, 158 to 180, 181 to 202, and 204 to 226; these read KHKN…ELLK, YLER…LAQK, NLVE…IGSL, KLQC…IGRL, ALRH…VGDL, ELQT…LHMC, SLQY…CQLP, SLNE…LGRS, and ELQY…LYNK.

This Homo sapiens (Human) protein is Leucine-rich repeat-containing protein 28 (LRRC28).